The chain runs to 291 residues: Cell division protein ZipA (291 aa).

Residues 1–5 are Periplasmic-facing; that stretch reads MQELR. The helical transmembrane segment at 6-26 threads the bilayer; it reads FVLIIVGALAIAALLFHGLWT. At 27-291 the chain is on the cytoplasmic side; the sequence is SKKEGKSKFG…QEFKVRAAQA (265 aa). Basic and acidic residues predominate over residues 29–51; that stretch reads KEGKSKFGDKPLRKMKVESDDPP. 2 disordered regions span residues 29–61 and 92–119; these read KEGK…EDDF and ELDE…VQPQ.

Belongs to the ZipA family. In terms of assembly, interacts with FtsZ via their C-terminal domains.

It is found in the cell inner membrane. Functionally, essential cell division protein that stabilizes the FtsZ protofilaments by cross-linking them and that serves as a cytoplasmic membrane anchor for the Z ring. Also required for the recruitment to the septal ring of downstream cell division proteins. This Vibrio cholerae serotype O1 (strain ATCC 39541 / Classical Ogawa 395 / O395) protein is Cell division protein ZipA.